Reading from the N-terminus, the 575-residue chain is Epsin-1 (575 aa).

Residues Lys-11, Arg-25, Asn-30, Arg-63, and His-73 each contribute to the a 1,2-diacyl-sn-glycero-3-phospho-(1D-myo-inositol-4,5-bisphosphate) site. In terms of domain architecture, ENTH spans 12 to 144 (NIVHNYSEAE…RDEDRLREER (133 aa)). Residues 150 to 186 (TKEKLAQTATASSAAVGSGPPPEAEQAWPQSSGEEEL) are disordered. Residues 157-167 (TATASSAAVGS) are compositionally biased toward low complexity. 3 consecutive UIM domains span residues 183-202 (EEELQLQLALAMSKEEADQP), 208-227 (EDDVQLQLALSLSREEHDKE), and 233-252 (GDDLRLQMAIEESKRETGGK). The disordered stretch occupies residues 264–575 (FTTPAPPQAS…PAPNTNPFLL (312 aa)). 8 repeat units span residues 274 to 276 (DPW), 294 to 296 (DPW), 306 to 308 (DPW), 319 to 321 (DPW), 332 to 334 (DPW), 349 to 351 (DPW), 367 to 369 (DPW), and 377 to 379 (DPW). An 8 X 3 AA repeats of D-P-W region spans residues 274-379 (DPWGGPASVP…APAPAFSDPW (106 aa)). Low complexity-rich tracts occupy residues 279-299 (PASVPTAVPVAAAASDPWGGP) and 306-316 (DPWGGAAPTPA). Positions 332–346 (DPWGGTPAPAAGEGP) are enriched in low complexity. Positions 367–379 (DPWAPAPAFSDPW) are enriched in low complexity. Ser-382 carries the post-translational modification Phosphoserine. The [DE]-X(1,2)-F-X-X-[FL]-X-X-X-R motif signature appears at 401–410 (DEFSDFDRLR). 2 positions are modified to phosphoserine: Ser-418 and Ser-419. At Thr-420 the chain carries Phosphothreonine. Phosphoserine is present on residues Ser-434, Ser-446, and Ser-453. Positions 453-467 (SPPPAATPTPTPPTR) are enriched in pro residues. Thr-459, Thr-463, and Thr-469 each carry phosphothreonine. Residue Ser-472 is modified to Phosphoserine. Residue Thr-493 is modified to Phosphothreonine. 2 consecutive repeat copies span residues 501–503 (NPF) and 517–519 (NPF). Residues 501 to 573 (NPFLPSGAPP…GPPAPNTNPF (73 aa)) form a 3 X 3 AA repeats of N-P-F region. Omega-N-methylarginine is present on Arg-533. A compositionally biased stretch (pro residues) spans 556-569 (GLPPMMPPGPPAPN). Repeat unit 3 spans residues 571–573 (NPF).

The protein belongs to the epsin family. As to quaternary structure, monomer. Binds clathrin and ZBTB16/ZNF145. Binds ubiquitinated proteins. Interacts with RALBP1 in a complex also containing NUMB and TFAP2A during interphase and mitosis. Interacts with AP2B1. Interacts with UBQLN2. Interacts with ITSN1. Interacts with AP2A1 and AP2A2. Interacts with REPS2; the interaction is direct. Interacts with EPS15; the interaction is direct. Interacts with ENTREP1. Post-translationally, phosphorylated on serine and/or threonine residues in mitotic cells. Phosphorylation reduces interaction with REPS2, AP-2 and the membrane fraction. Depolarization of synaptosomes results in dephosphorylation. In terms of processing, ubiquitinated.

It localises to the cytoplasm. Its subcellular location is the cell membrane. The protein resides in the nucleus. The protein localises to the membrane. It is found in the clathrin-coated pit. In terms of biological role, binds to membranes enriched in phosphatidylinositol 4,5-bisphosphate (PtdIns(4,5)P2). Modifies membrane curvature and facilitates the formation of clathrin-coated invaginations. Regulates receptor-mediated endocytosis. The polypeptide is Epsin-1 (Epn1) (Mus musculus (Mouse)).